Reading from the N-terminus, the 259-residue chain is Imidazole glycerol phosphate synthase subunit HisF (259 aa).

Residues Asp11 and Asp130 contribute to the active site.

The protein belongs to the HisA/HisF family. Heterodimer of HisH and HisF.

The protein resides in the cytoplasm. It carries out the reaction 5-[(5-phospho-1-deoxy-D-ribulos-1-ylimino)methylamino]-1-(5-phospho-beta-D-ribosyl)imidazole-4-carboxamide + L-glutamine = D-erythro-1-(imidazol-4-yl)glycerol 3-phosphate + 5-amino-1-(5-phospho-beta-D-ribosyl)imidazole-4-carboxamide + L-glutamate + H(+). The protein operates within amino-acid biosynthesis; L-histidine biosynthesis; L-histidine from 5-phospho-alpha-D-ribose 1-diphosphate: step 5/9. In terms of biological role, IGPS catalyzes the conversion of PRFAR and glutamine to IGP, AICAR and glutamate. The HisF subunit catalyzes the cyclization activity that produces IGP and AICAR from PRFAR using the ammonia provided by the HisH subunit. In Nitratidesulfovibrio vulgaris (strain DP4) (Desulfovibrio vulgaris), this protein is Imidazole glycerol phosphate synthase subunit HisF.